We begin with the raw amino-acid sequence, 113 residues long: UPF0251 protein Teth514_1147 (113 aa).

Belongs to the UPF0251 family.

This is UPF0251 protein Teth514_1147 from Thermoanaerobacter sp. (strain X514).